Reading from the N-terminus, the 782-residue chain is Probable methionine--tRNA ligase, cytoplasmic (782 aa).

The 'HIGH' region motif lies at 231 to 241 (PYVNNVPHLGN). The 'KMSKS' region motif lies at 551–555 (KFSKS).

Belongs to the class-I aminoacyl-tRNA synthetase family.

It localises to the cytoplasm. It catalyses the reaction tRNA(Met) + L-methionine + ATP = L-methionyl-tRNA(Met) + AMP + diphosphate. In Schizosaccharomyces pombe (strain 972 / ATCC 24843) (Fission yeast), this protein is Probable methionine--tRNA ligase, cytoplasmic (rar1).